The sequence spans 128 residues: NHP2-like protein 1 (128 aa).

Positions 36–48 (RKGANEATKTLNR) are interaction with U4 snRNA and U4atac snRNA. Residues 96–128 (SRPVIACSVTIKEGSQLKPQIQSVQQAIERLLV) are important for U4 snRNA-binding.

This sequence belongs to the eukaryotic ribosomal protein eL8 family. As to quaternary structure, identified in the spliceosome B complex. Component of the U4/U6-U5 tri-snRNP complex. Part of the small subunit (SSU) processome, composed of more than 70 proteins and the RNA chaperone small nucleolar RNA (snoRNA) U3.

The protein localises to the nucleus. It is found in the nucleolus. In terms of biological role, part of the small subunit (SSU) processome, first precursor of the small eukaryotic ribosomal subunit. During the assembly of the SSU processome in the nucleolus, many ribosome biogenesis factors, an RNA chaperone and ribosomal proteins associate with the nascent pre-rRNA and work in concert to generate RNA folding, modifications, rearrangements and cleavage as well as targeted degradation of pre-ribosomal RNA by the RNA exosome. Involved in pre-mRNA splicing as component of the spliceosome. Binds to the 5'-stem-loop of U4 snRNA and thereby contributes to spliceosome assembly. The protein undergoes a conformational change upon RNA-binding. Core component of box C/D small nucleolar ribonucleoprotein (snoRNP) complexes that function in methylation of multiple sites on ribosomal RNAs (rRNAs) and messenger RNAs (mRNAs). The protein is NHP2-like protein 1 of Xenopus laevis (African clawed frog).